Consider the following 428-residue polypeptide: 3-phosphoshikimate 1-carboxyvinyltransferase (428 aa).

Lysine 22, serine 23, and arginine 27 together coordinate 3-phosphoshikimate. Lysine 22 provides a ligand contact to phosphoenolpyruvate. Residues glycine 96 and arginine 124 each contribute to the phosphoenolpyruvate site. The 3-phosphoshikimate site is built by serine 170, serine 171, glutamine 172, serine 198, aspartate 314, asparagine 337, and lysine 341. Glutamine 172 contributes to the phosphoenolpyruvate binding site. The Proton acceptor role is filled by aspartate 314. The phosphoenolpyruvate site is built by arginine 345, arginine 387, and lysine 412.

The protein belongs to the EPSP synthase family. As to quaternary structure, monomer.

It is found in the cytoplasm. It carries out the reaction 3-phosphoshikimate + phosphoenolpyruvate = 5-O-(1-carboxyvinyl)-3-phosphoshikimate + phosphate. The protein operates within metabolic intermediate biosynthesis; chorismate biosynthesis; chorismate from D-erythrose 4-phosphate and phosphoenolpyruvate: step 6/7. In terms of biological role, catalyzes the transfer of the enolpyruvyl moiety of phosphoenolpyruvate (PEP) to the 5-hydroxyl of shikimate-3-phosphate (S3P) to produce enolpyruvyl shikimate-3-phosphate and inorganic phosphate. In Shewanella amazonensis (strain ATCC BAA-1098 / SB2B), this protein is 3-phosphoshikimate 1-carboxyvinyltransferase.